We begin with the raw amino-acid sequence, 356 residues long: Mannonate dehydratase 2 (356 aa).

This sequence belongs to the mannonate dehydratase family. Requires Fe(2+) as cofactor. It depends on Mn(2+) as a cofactor.

The catalysed reaction is D-mannonate = 2-dehydro-3-deoxy-D-gluconate + H2O. Its pathway is carbohydrate metabolism; pentose and glucuronate interconversion. Catalyzes the dehydration of D-mannonate. The sequence is that of Mannonate dehydratase 2 from Bacillus licheniformis (strain ATCC 14580 / DSM 13 / JCM 2505 / CCUG 7422 / NBRC 12200 / NCIMB 9375 / NCTC 10341 / NRRL NRS-1264 / Gibson 46).